A 222-amino-acid chain; its full sequence is Exosome complex component Rrp4 (222 aa).

Positions 63–131 constitute an S1 motif domain; that stretch reads GDLVIGRVTG…EINRVKLTLR (69 aa).

The protein belongs to the RRP4 family. As to quaternary structure, component of the archaeal exosome complex. Forms a trimer of Rrp4 and/or Csl4 subunits. The trimer associates with a hexameric ring-like arrangement composed of 3 Rrp41-Rrp42 heterodimers.

Its subcellular location is the cytoplasm. In terms of biological role, non-catalytic component of the exosome, which is a complex involved in RNA degradation. Increases the RNA binding and the efficiency of RNA degradation. Confers strong poly(A) specificity to the exosome. This chain is Exosome complex component Rrp4, found in Methanosphaera stadtmanae (strain ATCC 43021 / DSM 3091 / JCM 11832 / MCB-3).